Reading from the N-terminus, the 467-residue chain is Cytochrome P450 76A1 (467 aa).

Residue cysteine 410 participates in heme binding.

Belongs to the cytochrome P450 family. It depends on heme as a cofactor.

This is Cytochrome P450 76A1 (CYP76A1) from Solanum melongena (Eggplant).